Reading from the N-terminus, the 109-residue chain is Cell division protein ZapA (109 aa).

Residues 21–99 (PEQRDALNQA…IEQALLEQGR (79 aa)) adopt a coiled-coil conformation.

It belongs to the ZapA family. Type 1 subfamily. As to quaternary structure, homodimer. Interacts with FtsZ.

The protein resides in the cytoplasm. Its function is as follows. Activator of cell division through the inhibition of FtsZ GTPase activity, therefore promoting FtsZ assembly into bundles of protofilaments necessary for the formation of the division Z ring. It is recruited early at mid-cell but it is not essential for cell division. The chain is Cell division protein ZapA from Klebsiella pneumoniae subsp. pneumoniae (strain ATCC 700721 / MGH 78578).